Consider the following 1687-residue polypeptide: A-kinase anchor protein 12 (1687 aa).

The interval 1–108 (MGAGSSTEQR…EKDRVEEMAA (108 aa)) is disordered. Residue G2 is the site of N-myristoyl glycine attachment. Phosphoserine is present on residues S11, S18, S22, and S27. Residues 30–48 (GPAAEASGAAGDPADADPA) show a composition bias toward low complexity. A compositionally biased stretch (polar residues) spans 52 to 62 (PQKNGQLSTVN). Positions 75 to 88 (ENQEGQEEEVVDED) are enriched in acidic residues. Residues 89–105 (VGQRESEDVREKDRVEE) are compositionally biased toward basic and acidic residues. Residues S136 and S204 each carry the phosphoserine modification. Disordered stretches follow at residues 175-282 (SDTV…ETTS) and 298-355 (KTSF…DYEK). Positions 213 to 230 (ASKESELKQSTEKQEGTL) are enriched in basic and acidic residues. 2 positions are modified to phosphoserine: S235 and S245. Acidic residues predominate over residues 247–259 (QAAEEEAKDEGEE). An involved in PKC-binding region spans residues 254–544 (KDEGEEKQEK…QHIHTESPES (291 aa)). Residues S268, S271, S274, and S304 each carry the phosphoserine modification. Over residues 268 to 282 (SPESPSSPVSSETTS) the composition is skewed to low complexity. Residues 303–321 (KSKEDDLETAEKRKEQEAE) are compositionally biased toward basic and acidic residues. T331 carries the phosphothreonine modification. The segment covering 334-344 (ASEEQEPAEDT) has biased composition (acidic residues). Phosphoserine occurs at positions 335 and 350. Residue Y353 is modified to Phosphotyrosine. S371 bears the Phosphoserine mark. The tract at residues 402–481 (VEKTEEEQGG…EKTLPKHPEG (80 aa)) is disordered. Residues 417 to 426 (GGVVVEGTGE) are compositionally biased toward low complexity. Residue S469 is modified to Phosphoserine. Positions 470-480 (PEEKTLPKHPE) are enriched in basic and acidic residues. Phosphoserine occurs at positions 491, 507, and 509. The disordered stretch occupies residues 496–828 (KVQGSPLKKL…INEDDPDVPA (333 aa)). Low complexity predominate over residues 499–513 (GSPLKKLFSSSGLKK). Residues 514 to 523 (LSGKKQKGKR) are compositionally biased toward basic residues. Residues 533–550 (EYQHIHTESPESADEQKG) show a composition bias toward basic and acidic residues. S541, S544, S585, S599, S614, and S616 each carry phosphoserine. Positions 594–614 (ITPWASFKKMVTPKKRVRRPS) match the AKAP CaM-binding 1 motif. The span at 612 to 626 (RPSESDKEEELEKVK) shows a compositional bias: basic and acidic residues. The segment covering 628 to 639 (ATLSSTDSTVSE) has biased composition (polar residues). A Phosphothreonine modification is found at T629. S631, S632, S635, and S638 each carry phosphoserine. Residues 642 to 661 (DEVKTVGEEQKPEEPKRRVD) are compositionally biased toward basic and acidic residues. 3 positions are modified to phosphoserine: S683, S684, and S685. The span at 697 to 711 (DSHRAEEASKDKEAG) shows a compositional bias: basic and acidic residues. Over residues 717–726 (ASTQEQDQAQ) the composition is skewed to polar residues. A compositionally biased stretch (low complexity) spans 727–744 (GSSSPEPAGSPSEGEGVS). Phosphoserine is present on residues S736, S748, S770, S771, and S789. Positions 743-763 (VSTWESFKRLVTPRKKSKSKL) match the AKAP CaM-binding 2 motif. The short motif at 784-804 (EESWVSIKKFIPGRRKKRADG) is the AKAP CaM-binding 3 element. At T871 the chain carries Phosphothreonine. S873 bears the Phosphoserine mark. Positions 959-981 (ETSEALRTEEVTEASGAEETTDM) are disordered. A Glycyl lysine isopeptide (Lys-Gly) (interchain with G-Cter in SUMO1) cross-link involves residue K1030. Residues 1035–1045 (VPATQTVQRTG) are compositionally biased toward polar residues. Disordered stretches follow at residues 1035–1105 (VPAT…EVTA), 1125–1221 (AVAP…LAAA), 1277–1361 (CQEK…QDKA), and 1443–1487 (TPAP…TAIE). S1059 carries the post-translational modification Phosphoserine. The span at 1130 to 1157 (SSETLTDSETNGSTPLADSDTADGTQQD) shows a compositional bias: polar residues. Residues 1199–1211 (QEEHGEEPGRDVL) show a composition bias toward basic and acidic residues. The residue at position 1289 (S1289) is a Phosphoserine. The segment covering 1298 to 1310 (DVEKEKRETKPEQ) has biased composition (basic and acidic residues). Phosphoserine occurs at positions 1348, 1352, and 1354. The segment covering 1462-1487 (QRERSEEEDKPDAGPDADGKESTAIE) has biased composition (basic and acidic residues). An RII-binding region spans residues 1498–1511 (ELESKSNKIVLNVI). 2 disordered regions span residues 1522 to 1582 (ETAP…GSAS) and 1599 to 1687 (IEKL…LAES). The span at 1530-1547 (YDSQTQVPAMQADSQGAQ) shows a compositional bias: polar residues. Residues S1543 and S1571 each carry the phosphoserine modification. A compositionally biased stretch (low complexity) spans 1618 to 1630 (QLQSLAQAEASAS). The residue at position 1637 (S1637) is a Phosphoserine. Over residues 1645 to 1687 (LTEEGDAPKVEVQEEEMSTKSVKENKAQAEEDLQEPKGDLAES) the composition is skewed to basic and acidic residues.

As to quaternary structure, binds to dimeric RII-alpha regulatory subunit of PKC. In terms of processing, phosphorylated by PKC (in vitro).

Its subcellular location is the cytoplasm. It localises to the cytoskeleton. The protein localises to the membrane. Anchoring protein that mediates the subcellular compartmentation of protein kinase A (PKA) and protein kinase C (PKC). The protein is A-kinase anchor protein 12 (Akap12) of Rattus norvegicus (Rat).